Here is a 114-residue protein sequence, read N- to C-terminus: Flagellar hook-basal body complex protein FliE (114 aa).

This sequence belongs to the FliE family.

It is found in the bacterial flagellum basal body. In Burkholderia cenocepacia (strain ATCC BAA-245 / DSM 16553 / LMG 16656 / NCTC 13227 / J2315 / CF5610) (Burkholderia cepacia (strain J2315)), this protein is Flagellar hook-basal body complex protein FliE.